The chain runs to 498 residues: Probable malate:quinone oxidoreductase 2 (498 aa).

Belongs to the MQO family. It depends on FAD as a cofactor.

It carries out the reaction (S)-malate + a quinone = a quinol + oxaloacetate. The protein operates within carbohydrate metabolism; tricarboxylic acid cycle; oxaloacetate from (S)-malate (quinone route): step 1/1. In Staphylococcus aureus (strain MW2), this protein is Probable malate:quinone oxidoreductase 2.